The following is a 307-amino-acid chain: Methionyl-tRNA formyltransferase (307 aa).

Serine 109–proline 112 lines the (6S)-5,6,7,8-tetrahydrofolate pocket.

This sequence belongs to the Fmt family.

The catalysed reaction is L-methionyl-tRNA(fMet) + (6R)-10-formyltetrahydrofolate = N-formyl-L-methionyl-tRNA(fMet) + (6S)-5,6,7,8-tetrahydrofolate + H(+). Its function is as follows. Attaches a formyl group to the free amino group of methionyl-tRNA(fMet). The formyl group appears to play a dual role in the initiator identity of N-formylmethionyl-tRNA by promoting its recognition by IF2 and preventing the misappropriation of this tRNA by the elongation apparatus. In Mycobacteroides abscessus (strain ATCC 19977 / DSM 44196 / CCUG 20993 / CIP 104536 / JCM 13569 / NCTC 13031 / TMC 1543 / L948) (Mycobacterium abscessus), this protein is Methionyl-tRNA formyltransferase.